Here is a 455-residue protein sequence, read N- to C-terminus: Golgi pH regulator (455 aa).

A run of 5 helical transmembrane segments spans residues I5–F25, V46–L66, L79–V99, C114–L134, and V150–P170. N180 is a glycosylation site (N-linked (GlcNAc...) asparagine). 4 consecutive transmembrane segments (helical) span residues F288 to I308, I343 to L363, V378 to I398, and W425 to H445.

The protein belongs to the Golgi pH regulator (TC 1.A.38) family. In terms of assembly, homotrimer. Interacts with RABL3; the interaction stabilizes GPR89.

It is found in the golgi apparatus membrane. It carries out the reaction iodide(out) = iodide(in). It catalyses the reaction chloride(in) = chloride(out). The enzyme catalyses bromide(in) = bromide(out). The catalysed reaction is fluoride(in) = fluoride(out). Voltage-gated channel that enables the transfer of monoatomic anions such as iodide, chloride, bromide and fluoride which may function in counter-ion conductance and participates in Golgi acidification. Plays a role in lymphocyte development, probably by acting as a RABL3 effector in hematopoietic cells. The chain is Golgi pH regulator from Mus musculus (Mouse).